The primary structure comprises 175 residues: MTRNPQPDRSKTAPKNAKRDPVASGERDASVNRAASHNYFLLDKYEAGVALRGTEVKSIRDGRANLKDAYGLVKENELWLINAHIGPYDAASYNNHAPLRTRKLLVKKREILKLLAASQQKGHTLIPTRMYFKNGRVKVELAVAKGKQLWDKRETDRRKTADRDAREAIARSRKS.

2 disordered regions span residues 1 to 29 (MTRN…ERDA) and 152 to 175 (KRET…SRKS).

It belongs to the SmpB family.

It localises to the cytoplasm. Its function is as follows. Required for rescue of stalled ribosomes mediated by trans-translation. Binds to transfer-messenger RNA (tmRNA), required for stable association of tmRNA with ribosomes. tmRNA and SmpB together mimic tRNA shape, replacing the anticodon stem-loop with SmpB. tmRNA is encoded by the ssrA gene; the 2 termini fold to resemble tRNA(Ala) and it encodes a 'tag peptide', a short internal open reading frame. During trans-translation Ala-aminoacylated tmRNA acts like a tRNA, entering the A-site of stalled ribosomes, displacing the stalled mRNA. The ribosome then switches to translate the ORF on the tmRNA; the nascent peptide is terminated with the 'tag peptide' encoded by the tmRNA and targeted for degradation. The ribosome is freed to recommence translation, which seems to be the essential function of trans-translation. The chain is SsrA-binding protein from Koribacter versatilis (strain Ellin345).